Here is a 130-residue protein sequence, read N- to C-terminus: Prefoldin subunit alpha (130 aa).

This sequence belongs to the prefoldin subunit alpha family. Heterohexamer of two alpha and four beta subunits.

Its subcellular location is the cytoplasm. Functionally, molecular chaperone capable of stabilizing a range of proteins. Seems to fulfill an ATP-independent, HSP70-like function in archaeal de novo protein folding. The chain is Prefoldin subunit alpha (pfdA) from Thermoplasma acidophilum (strain ATCC 25905 / DSM 1728 / JCM 9062 / NBRC 15155 / AMRC-C165).